The sequence spans 462 residues: Trigger factor (462 aa).

The region spanning 172–257 is the PPIase FKBP-type domain; that stretch reads GDKATIDFVG…LKALAAPGET (86 aa). The interval 443–462 is disordered; it reads LLAADEEDEEEAAESSAALV. The span at 444–455 shows a compositional bias: acidic residues; it reads LAADEEDEEEAA.

This sequence belongs to the FKBP-type PPIase family. Tig subfamily.

The protein localises to the cytoplasm. The enzyme catalyses [protein]-peptidylproline (omega=180) = [protein]-peptidylproline (omega=0). Involved in protein export. Acts as a chaperone by maintaining the newly synthesized protein in an open conformation. Functions as a peptidyl-prolyl cis-trans isomerase. The sequence is that of Trigger factor from Methylocella silvestris (strain DSM 15510 / CIP 108128 / LMG 27833 / NCIMB 13906 / BL2).